The primary structure comprises 327 residues: UDP-glucose 4-epimerase (327 aa).

T119 lines the substrate pocket. The Proton acceptor role is filled by Y143.

Belongs to the NAD(P)-dependent epimerase/dehydratase family. The cofactor is NAD(+).

The enzyme catalyses UDP-alpha-D-glucose = UDP-alpha-D-galactose. It functions in the pathway carbohydrate metabolism; galactose metabolism. Its pathway is glycan metabolism; exopolysaccharide biosynthesis. The chain is UDP-glucose 4-epimerase (exoB) from Rhizobium leguminosarum bv. trifolii.